The sequence spans 276 residues: MDIWMAFQALILGIVEGLTEFLPISSTGHLIVVGDLLGFNGETATAFKIIIQLGAILAVMWEFRARVLGVVLGLRSEPRAQRFTFNLLLAFIPAVVFGLAFADLIEHWLFNPITVATALIVGGIIMLWAEKREHAIQAESVDDMTWKLALKVGFAQCLALIPGTSRSGATIIGGLVFGLSRKAATEFSFFLAMPTMIAATVYSLFKYRDILQWSDLPIFAIGFVSTFIVAMITVRALLKFIANHSYAVFAWYRIAFGLVILATWQLHLIDWSTAQP.

7 consecutive transmembrane segments (helical) span residues 12–34 (LGIVEGLTEFLPISSTGHLIVVG), 43–63 (TATAFKIIIQLGAILAVMWEF), 85–105 (FNLLLAFIPAVVFGLAFADLI), 108–128 (WLFNPITVATALIVGGIIMLW), 185–205 (TEFSFFLAMPTMIAATVYSLF), 218–238 (IFAIGFVSTFIVAMITVRALL), and 249–269 (FAWYRIAFGLVILATWQLHLI).

It belongs to the UppP family.

Its subcellular location is the cell inner membrane. The catalysed reaction is di-trans,octa-cis-undecaprenyl diphosphate + H2O = di-trans,octa-cis-undecaprenyl phosphate + phosphate + H(+). Catalyzes the dephosphorylation of undecaprenyl diphosphate (UPP). Confers resistance to bacitracin. The chain is Undecaprenyl-diphosphatase from Ectopseudomonas mendocina (strain ymp) (Pseudomonas mendocina).